Consider the following 297-residue polypeptide: MMNLKAVIPVAGLGMHMLPATKAIPKEMLPIVDKPMIQYIVDEIVAAGIKEIVLVTHASKNAVENHFDTSYELESLLEQRVKRQLLAEVQSICPPGVTIMNVRQAQPLGLGHSILCARPVVGDNPFIVVLPDIIIDDATADPLRYNLAAMVARFNETGRSQVLAKRMKGDLSEYSVIQTKEPLDNEGKVSRIVEFIEKPDQPQTLDSDLMAVGRYVLSADIWAELERTEPGAWGRIQLTDAIAELAKKQSVDAMLMTGDSYDCGKKMGYMQAFVKYGLRNLKEGAKFRKSIEQLLHE.

This sequence belongs to the UDPGP type 2 family.

The enzyme catalyses alpha-D-glucose 1-phosphate + UTP + H(+) = UDP-alpha-D-glucose + diphosphate. It participates in carbohydrate metabolism; nucleotide-sugar metabolism. The protein operates within bacterial outer membrane biogenesis; lipopolysaccharide biosynthesis. Its function is as follows. May play a role in stationary phase survival. The sequence is that of UTP--glucose-1-phosphate uridylyltransferase (galF) from Salmonella typhimurium (strain LT2 / SGSC1412 / ATCC 700720).